The sequence spans 884 residues: Nonsense-mediated mRNA decay factor EBS1 (884 aa).

Disordered regions lie at residues 596 to 645 and 755 to 774; these read NSMK…PTMG and QGGL…NSAY. Over residues 633–645 the composition is skewed to polar residues; that stretch reads RSSSLDSFSPTMG. The span at 760-772 shows a compositional bias: low complexity; the sequence is SSQQPSSMSSLNS.

It belongs to the EST1 family. Interacts with NMD helicase UPF1. Interacts with CDC33.

The protein localises to the nucleus. The protein resides in the chromosome. It is found in the telomere. It localises to the cytoplasm. Its subcellular location is the P-body. In terms of biological role, plays a role in nonsense-mediated mRNA decay (NMD). Recruits UPF1 to cytoplasmic mRNA decay bodies (P-bodies). Negative regulator of gene expression. Inhibits translation most likely through effects on eIF-4E (CDC33). Involved in telomere maintenance. This chain is Nonsense-mediated mRNA decay factor EBS1, found in Saccharomyces cerevisiae (strain ATCC 204508 / S288c) (Baker's yeast).